We begin with the raw amino-acid sequence, 343 residues long: MGAIMQANENMGSKLPKTDGKVIYLAGGCFWGLEAYMERIYGVVDASSGYANGKTQSTNYQKLHESDHAESVKVVYDPKKISLDKLLRYYFKVVDPVSVNKQGNDVGRQYRTGIYYVDNADKKVIDNALKELQKSVKGKIAIEVEPLKNYVRAEIYHQDYLKKNPNGYCHIDLKKADEVIVDSDKYTKPSDEVLKKKLTQLQYEVTQNKRTEKPFENEYYNKEEEGIYVDITTGEPLFSMADKYDSGCGWPSFSKPISKDVVKYEDDESLNMRRTEVLSRIGKAHLGHVFNDGPKELGGLRYCINSASLRFIPLKDMEKEGYGEFIPYIKKGELKKYIHDKTH.

Residues 21–174 (KVIYLAGGCF…PNGYCHIDLK (154 aa)) are peptide methionine sulfoxide reductase A. The active-site Cysteine sulfenic acid (-SOH) intermediate is cysteine 29. Residues 191–314 (DEVLKKKLTQ…NSASLRFIPL (124 aa)) form the MsrB domain. Catalysis depends on cysteine 303, which acts as the Nucleophile.

This sequence in the N-terminal section; belongs to the MsrA Met sulfoxide reductase family. In the C-terminal section; belongs to the MsrB Met sulfoxide reductase family.

It catalyses the reaction L-methionyl-[protein] + [thioredoxin]-disulfide + H2O = L-methionyl-(S)-S-oxide-[protein] + [thioredoxin]-dithiol. The catalysed reaction is [thioredoxin]-disulfide + L-methionine + H2O = L-methionine (S)-S-oxide + [thioredoxin]-dithiol. The enzyme catalyses L-methionyl-[protein] + [thioredoxin]-disulfide + H2O = L-methionyl-(R)-S-oxide-[protein] + [thioredoxin]-dithiol. Its function is as follows. Has an important function as a repair enzyme for proteins that have been inactivated by oxidation. Catalyzes the reversible oxidation-reduction of methionine sulfoxide in proteins to methionine. The polypeptide is Peptide methionine sulfoxide reductase msrA/msrB (Enterococcus faecalis (Streptococcus faecalis)).